Reading from the N-terminus, the 350-residue chain is Biotin synthase (350 aa).

One can recognise a Radical SAM core domain in the interval 54–278 (REIQLSTLLS…TMPQSYVRLS (225 aa)). Positions 69, 73, and 76 each coordinate [4Fe-4S] cluster. Positions 113, 144, 204, and 276 each coordinate [2Fe-2S] cluster.

This sequence belongs to the radical SAM superfamily. Biotin synthase family. In terms of assembly, homodimer. Requires [4Fe-4S] cluster as cofactor. The cofactor is [2Fe-2S] cluster.

The catalysed reaction is (4R,5S)-dethiobiotin + (sulfur carrier)-SH + 2 reduced [2Fe-2S]-[ferredoxin] + 2 S-adenosyl-L-methionine = (sulfur carrier)-H + biotin + 2 5'-deoxyadenosine + 2 L-methionine + 2 oxidized [2Fe-2S]-[ferredoxin]. The protein operates within cofactor biosynthesis; biotin biosynthesis; biotin from 7,8-diaminononanoate: step 2/2. Catalyzes the conversion of dethiobiotin (DTB) to biotin by the insertion of a sulfur atom into dethiobiotin via a radical-based mechanism. The sequence is that of Biotin synthase from Neisseria gonorrhoeae (strain ATCC 700825 / FA 1090).